The primary structure comprises 341 residues: tRNA N6-adenosine threonylcarbamoyltransferase (341 aa).

Residues histidine 117 and histidine 121 each coordinate Fe cation. Residues 140-144 (VVSGG), aspartate 173, glycine 186, and asparagine 278 contribute to the substrate site. Aspartate 306 serves as a coordination point for Fe cation.

Belongs to the KAE1 / TsaD family. Fe(2+) serves as cofactor.

The protein resides in the cytoplasm. The catalysed reaction is L-threonylcarbamoyladenylate + adenosine(37) in tRNA = N(6)-L-threonylcarbamoyladenosine(37) in tRNA + AMP + H(+). Required for the formation of a threonylcarbamoyl group on adenosine at position 37 (t(6)A37) in tRNAs that read codons beginning with adenine. Is involved in the transfer of the threonylcarbamoyl moiety of threonylcarbamoyl-AMP (TC-AMP) to the N6 group of A37, together with TsaE and TsaB. TsaD likely plays a direct catalytic role in this reaction. The chain is tRNA N6-adenosine threonylcarbamoyltransferase from Symbiobacterium thermophilum (strain DSM 24528 / JCM 14929 / IAM 14863 / T).